The sequence spans 212 residues: Probable nicotinate-nucleotide adenylyltransferase (212 aa).

Belongs to the NadD family.

The enzyme catalyses nicotinate beta-D-ribonucleotide + ATP + H(+) = deamido-NAD(+) + diphosphate. It functions in the pathway cofactor biosynthesis; NAD(+) biosynthesis; deamido-NAD(+) from nicotinate D-ribonucleotide: step 1/1. Its function is as follows. Catalyzes the reversible adenylation of nicotinate mononucleotide (NaMN) to nicotinic acid adenine dinucleotide (NaAD). This chain is Probable nicotinate-nucleotide adenylyltransferase, found in Shewanella sp. (strain MR-4).